We begin with the raw amino-acid sequence, 523 residues long: GMP synthase [glutamine-hydrolyzing] (523 aa).

Positions K8–K205 constitute a Glutamine amidotransferase type-1 domain. The active-site Nucleophile is C85. Residues H179 and E181 contribute to the active site. The GMPS ATP-PPase domain maps to W206–R398. S233–S239 lines the ATP pocket.

As to quaternary structure, homodimer.

It catalyses the reaction XMP + L-glutamine + ATP + H2O = GMP + L-glutamate + AMP + diphosphate + 2 H(+). It functions in the pathway purine metabolism; GMP biosynthesis; GMP from XMP (L-Gln route): step 1/1. Catalyzes the synthesis of GMP from XMP. The sequence is that of GMP synthase [glutamine-hydrolyzing] from Haemophilus influenzae (strain PittGG).